We begin with the raw amino-acid sequence, 71 residues long: Small ribosomal subunit protein bS21 (71 aa).

Residues 39–71 (EKPTQERKRKAAAAVKRQMRRTSRDVTKRKRLY) are disordered. Basic residues predominate over residues 45–71 (RKRKAAAAVKRQMRRTSRDVTKRKRLY).

The protein belongs to the bacterial ribosomal protein bS21 family.

In Xylella fastidiosa (strain M12), this protein is Small ribosomal subunit protein bS21.